The following is a 306-amino-acid chain: Secretory carrier-associated membrane protein 1 (306 aa).

The disordered stretch occupies residues 1–66; it reads MAGRYDSNPF…LPPEPAAFGA (66 aa). Over 1–141 the chain is Cytoplasmic; sequence MAGRYDSNPF…EIPSHLQRMQ (141 aa). The segment covering 25-36 has biased composition (gly residues); that stretch reads KAGGQPSYGGGA. Residues 40 to 55 are compositionally biased toward low complexity; sequence PNPRNVPSVSSNSRLS. A coiled-coil region spans residues 72–109; that stretch reads LDSSKDLKNREKELQAREAELNKREKELKRREEAAARA. The next 4 helical transmembrane spans lie at 142–162, 174–194, 209–229, and 257–277; these read YVAF…VIAV, IWLL…VLWY, FGLF…SAVA, and IFYF…IWVI. Residues 278-306 are Cytoplasmic-facing; it reads QQVYMYFRGSGKAAEMKRDATRGAMRAAF.

Belongs to the SCAMP family.

The protein resides in the cell membrane. It localises to the cytoplasmic vesicle. It is found in the secretory vesicle membrane. Its function is as follows. Probably involved in membrane trafficking. The polypeptide is Secretory carrier-associated membrane protein 1 (SCAMP1) (Oryza sativa subsp. japonica (Rice)).